A 989-amino-acid polypeptide reads, in one-letter code: AP-2 complex subunit alpha-2 (989 aa).

4 HEAT repeats span residues 112-149, 188-225, 368-402, and 403-440; these read EMLP…KEVA, VTPD…ENPI, IMIK…MCDK, and NTCK…KFAS. Residues 610–745 form a disordered region; it reads DNSNTTSNTA…SSSPISSGGS (136 aa). The segment covering 611-623 has biased composition (low complexity); it reads NSNTTSNTANNSN. Residues 624–638 are compositionally biased toward polar residues; that stretch reads MINSQDSKISSGGFN. The segment covering 639–703 has biased composition (low complexity); it reads QSPQPSQQQQ…QPVYQQQQQA (65 aa). A compositionally biased stretch (polar residues) spans 704–714; that stretch reads ESFSPVQSDTV. A compositionally biased stretch (low complexity) spans 715 to 745; the sequence is SSFGQQQQQQQGGFSSPTIQASSSPISSGGS.

This sequence belongs to the adaptor complexes large subunit family. As to quaternary structure, adaptor protein complex 2 (AP-2) is a heterotetramer composed of two large adaptins (alpha-type and beta-type subunits), a medium adaptin (mu-type subunit AP50) and a small adaptin (sigma-type subunit AP17).

Its subcellular location is the cell membrane. The protein localises to the membrane. It is found in the coated pit. Functionally, component of the adaptor complexes which link clathrin to receptors in coated vesicles. Clathrin-associated protein complexes are believed to interact with the cytoplasmic tails of membrane proteins, leading to their selection and concentration. The protein is AP-2 complex subunit alpha-2 (ap2a1-1) of Dictyostelium discoideum (Social amoeba).